Here is a 481-residue protein sequence, read N- to C-terminus: Acetyltransferase peniE (481 aa).

Residues histidine 164 and aspartate 411 each act as proton acceptor in the active site.

Belongs to the plant acyltransferase family. Monomer.

Its function is as follows. Acetyltransferase; part of the gene cluster that mediates the biosynthesis of penifulvin A, a potent insecticidal sesquiterpene that features a [5.5.5.6]dioxafenestrane ring. The first step of the pathway is performed by the sesquiterpene cyclase peniA that generates the angular triquinane scaffold silphinene via cyclization of the linear farnesyl pyrophosphate (FPP). The cytochrome P450 monooxygenase peniB and the flavin-dependent monooxygenase peniC then catalyze a series of oxidation reactions to transform silphinene into penifulvin A. The dioxygenases peniD and peniF, as well as the acetyltransferase peniE, do not seem to be involved in the biosynthesis of penifulvin A. This chain is Acetyltransferase peniE, found in Penicillium patulum (Penicillium griseofulvum).